The chain runs to 139 residues: Natriuretic peptide Mc-NP (139 aa).

A signal peptide spans 1-25; sequence MVGLSRLRGGGLLLVLALLPLALDG. Residues 26–75 constitute a propeptide that is removed on maturation; sequence KPLEEAPTAPSRIIPFSRPVRKQSQAVLDPMVHPERPAGSGDDGDSRRLE. The tract at residues 45-72 is disordered; sequence VRKQSQAVLDPMVHPERPAGSGDDGDSR. An intrachain disulfide couples C86 to C102. The propeptide occupies 117-139; sequence IIPFSRPVRKESRAALDRMQQPG.

This sequence belongs to the natriuretic peptide family. In terms of tissue distribution, expressed by the venom gland.

The protein resides in the secreted. Its function is as follows. Snake venom natriuretic peptide that dose-dependently induces the rapid relaxation of rat aortic strips phenylephrine-precontracted. Acts by stimulating cGMP production in a dose-dependent manner (by probably activating NPR1 and/or NPR2). May also show potent hypotensive effects. A synthetic peptide (AA 77-108, where the Cys-95 is replaced by a Ser) increases sodium excretion and urinary volume in rat kidneys. This chain is Natriuretic peptide Mc-NP, found in Micrurus corallinus (Brazilian coral snake).